The sequence spans 500 residues: Pyridine nucleotide-disulfide oxidoreductase domain-containing protein 1 (500 aa).

Met1 is subject to N-acetylmethionine.

This sequence belongs to the class-I pyridine nucleotide-disulfide oxidoreductase family. PYROXD1 subfamily. FAD serves as cofactor.

It localises to the nucleus. The protein localises to the cytoplasm. The protein resides in the myofibril. It is found in the sarcomere. Its function is as follows. Probable FAD-dependent oxidoreductase; involved in the cellular oxidative stress response. Required for normal sarcomere structure and muscle fiber integrity. This is Pyridine nucleotide-disulfide oxidoreductase domain-containing protein 1 (PYROXD1) from Pongo abelii (Sumatran orangutan).